The chain runs to 547 residues: Cilia- and flagella- associated protein 210 (547 aa).

Residues 184–254 (KLNVEKAFKE…EIEMKKKQGK (71 aa)) are a coiled coil. Positions 210–237 (KDHLKQIKEHEEEEERRRKEEEKDAEEI) are disordered.

Microtubule inner protein component of sperm flagellar doublet microtubules. In terms of tissue distribution, expressed in trachea multiciliated cells.

Its subcellular location is the cytoplasm. The protein localises to the cytoskeleton. The protein resides in the cilium axoneme. It is found in the flagellum axoneme. In terms of biological role, microtubule inner protein (MIP) part of the dynein-decorated doublet microtubules (DMTs) in cilia axoneme, which is required for motile cilia beating. This chain is Cilia- and flagella- associated protein 210 (CFAP210), found in Bos taurus (Bovine).